Consider the following 88-residue polypeptide: Small ribosomal subunit protein bS16c (88 aa).

It belongs to the bacterial ribosomal protein bS16 family.

Its subcellular location is the plastid. The protein localises to the chloroplast. This chain is Small ribosomal subunit protein bS16c, found in Gossypium barbadense (Sea Island cotton).